Here is a 362-residue protein sequence, read N- to C-terminus: Trans-enoyl reductase phm4 (362 aa).

50 to 53 (VDAK) serves as a coordination point for NADP(+). 136 to 143 (TCFMTCGL) contributes to the substrate binding site. NADP(+)-binding positions include 171 to 174 (ATAT), 194 to 197 (SPHS), Tyr212, and 259 to 260 (LD). 280–284 (GPIML) lines the substrate pocket. 349–350 (VN) contributes to the NADP(+) binding site.

This sequence belongs to the zinc-containing alcohol dehydrogenase family. Monomer.

The protein operates within secondary metabolite biosynthesis. Functionally, trans-enoyl reductase; part of the gene cluster that mediates the biosynthesis of the trans-fused decalin-containing tetramic acid phomasetin, the stereochemical opposite of the HIV-1 integrase inhibitor equisetin. The PKS module of phm1 together with the enoylreductase phm4 catalyze the formation of the polyketide unit which is then conjugated to L-serine by the condensation domain of the phm1 NRPS module. Activity of the Dieckmann cyclase domain (RED) of phm1 results in release of the Dieckmann product intermediate. The Diels-Alderase phm7 then uses the Dieckmann product of phm1 as substrate and catalyzes the Diels-Alder cycloaddition to form the decalin ring of N-desmethylphomasetin. N-desmethylphomasetin is further methylated to phomasetin by the methyltransferase phm5. The sequence is that of Trans-enoyl reductase phm4 from Pyrenochaetopsis sp.